Consider the following 214-residue polypeptide: ATP-dependent Clp protease proteolytic subunit (214 aa).

The active-site Nucleophile is S113. The active site involves H138.

The protein belongs to the peptidase S14 family. As to quaternary structure, fourteen ClpP subunits assemble into 2 heptameric rings which stack back to back to give a disk-like structure with a central cavity, resembling the structure of eukaryotic proteasomes.

The protein resides in the cytoplasm. It catalyses the reaction Hydrolysis of proteins to small peptides in the presence of ATP and magnesium. alpha-casein is the usual test substrate. In the absence of ATP, only oligopeptides shorter than five residues are hydrolyzed (such as succinyl-Leu-Tyr-|-NHMec, and Leu-Tyr-Leu-|-Tyr-Trp, in which cleavage of the -Tyr-|-Leu- and -Tyr-|-Trp bonds also occurs).. Functionally, cleaves peptides in various proteins in a process that requires ATP hydrolysis. Has a chymotrypsin-like activity. Plays a major role in the degradation of misfolded proteins. This Teredinibacter turnerae (strain ATCC 39867 / T7901) protein is ATP-dependent Clp protease proteolytic subunit.